The chain runs to 550 residues: Arginine--tRNA ligase (550 aa).

The 'HIGH' region motif lies at 130–140; that stretch reads ANPTGPIHIGG.

It belongs to the class-I aminoacyl-tRNA synthetase family. As to quaternary structure, monomer.

Its subcellular location is the cytoplasm. It carries out the reaction tRNA(Arg) + L-arginine + ATP = L-arginyl-tRNA(Arg) + AMP + diphosphate. This Mycobacterium sp. (strain KMS) protein is Arginine--tRNA ligase.